Reading from the N-terminus, the 211-residue chain is Metalloproteinase inhibitor 3 (211 aa).

The N-terminal stretch at 1–23 (MTPWLGLVVLLSCWSLGHWGTEA) is a signal peptide. Cysteine 24 serves as a coordination point for Zn(2+). 2 involved in metalloproteinase-binding regions span residues 24 to 27 (CTCS) and 88 to 89 (ES). 6 disulfide bridges follow: cysteine 24-cysteine 91, cysteine 26-cysteine 118, cysteine 36-cysteine 143, cysteine 145-cysteine 192, cysteine 150-cysteine 155, and cysteine 163-cysteine 184. The NTR domain maps to 24–143 (CTCSPSHPQD…GLNYRYHLGC (120 aa)). The interval 105–188 (TGRVYEGKMY…SKHYACIRQK (84 aa)) is mediates interaction with EFEMP1.

This sequence belongs to the protease inhibitor I35 (TIMP) family. In terms of assembly, interacts with EFEMP1. Interacts with KDR.

The protein localises to the secreted. It is found in the extracellular space. The protein resides in the extracellular matrix. In terms of biological role, mediates a variety of processes including matrix regulation and turnover, inflammation, and angiogenesis, through reversible inhibition of zinc protease superfamily enzymes, primarily matrix metalloproteinases (MMPs). Regulates extracellular matrix (ECM) remodeling through inhibition of matrix metalloproteinases (MMP) including MMP-1, MMP-2, MMP-3, MMP-7, MMP-9, MMP-13, MMP-14 and MMP-15. Additionally, modulates the processing of amyloid precursor protein (APP) and apolipoprotein E receptor ApoER2 by inhibiting two alpha-secretases ADAM10 and ADAM17. Functions as a tumor suppressor and a potent inhibitor of angiogenesis. Exerts its anti-angiogenic effect by directly interacting with vascular endothelial growth factor (VEGF) receptor-2/KDR, preventing its binding to the VEGFA ligand. Selectively induces apoptosis in angiogenic endothelial cells through a caspase-independent cell death pathway. Mechanistically, inhibits matrix-induced focal adhesion kinase PTK2 tyrosine phosphorylation and association with paxillin/PXN and disrupts the incorporation of ITGB3, PTK2 and PXN into focal adhesion contacts on the matrix. The polypeptide is Metalloproteinase inhibitor 3 (Timp3) (Rattus norvegicus (Rat)).